Reading from the N-terminus, the 1680-residue chain is Sodium channel protein type 7 subunit alpha (1680 aa).

Over 1-117 (MLTSPEPKGL…RRAVIKVLVH (117 aa)) the chain is Cytoplasmic. One copy of the I repeat lies at 100 to 401 (TLSPLSSLRR…ILTMAYEQEK (302 aa)). The helical transmembrane segment at 118-137 (PLFRLLILISVLTDSILMCM) threads the bilayer. Over 138–141 (SNLP) the chain is Extracellular. A helical transmembrane segment spans residues 142–167 (EWILAVENTLLGIYTFEILVKVIARG). At 168-178 (IWAGSFSFLGD) the chain is on the cytoplasmic side. The helical transmembrane segment at 179-196 (LWNWLDFSVTLFELITRS) threads the bilayer. At 197–200 (SPLS) the chain is on the extracellular side. The helical transmembrane segment at 201 to 219 (SLPMFKTIRTLRILKIIPL) threads the bilayer. The Cytoplasmic segment spans residues 220-237 (NHGLQSIVVTLVQCLKKL). A helical transmembrane segment spans residues 238 to 259 (LGAIALALFFLTVSSLFGMGLF). The Extracellular portion of the chain corresponds to 260–338 (MGNLKHKCVR…PDNGFTSFDN (79 aa)). A disulfide bridge links Cys267 with Cys307. N-linked (GlcNAc...) asparagine glycosylation is found at Asn281 and Asn309. An intramembrane region (pore-forming) is located at residues 339 to 366 (FGWALLAMFRLMTQDYPELLYHQILYAS). Residue Gly367 is a topological domain, extracellular. The helical transmembrane segment at 368–407 (KIYMIFFVLISFWFAFYMASLFLGILTMAYEQEKQRASEE) threads the bilayer. Residues 408-505 (SRDMDSKCHQ…EFADRIITHP (98 aa)) lie on the Cytoplasmic side of the membrane. Residues 487–756 (CSPCWIKLNE…QLAVAWIKMV (270 aa)) form an II repeat. The chain crosses the membrane as a helical span at residues 506–521 (LFDLFLVICIILNICF). At 522-530 (LALEHFPMS) the chain is on the extracellular side. Residues 531–559 (EELMSLLAIGNLVFIGIYTIEMILKIIAM) traverse the membrane as a helical segment. The Cytoplasmic segment spans residues 560-568 (HPYGYFQIS). The helical transmembrane segment at 569–586 (WHIFDSILVVLGLTEMLL) threads the bilayer. Residues 587–592 (ADIEEI) lie on the Extracellular side of the membrane. The chain crosses the membrane as a helical span at residues 593–608 (TVFILVPLIFIKLGKY). The Cytoplasmic segment spans residues 609 to 625 (APPFKNLMRILGRALVA). A helical membrane pass occupies residues 626–654 (LKDLVLLVSIFIYFSAVFGMKLFGRSYKD). Over 655 to 672 (CVCHVDQDCQRQRWHMSD) the chain is Extracellular. Intrachain disulfides connect Cys657/Cys663 and Cys695/Cys704. Positions 673–699 (FLHAYVTVFRILCGEWIETLWECMEVA) form an intramembrane region, pore-forming. Position 700 (Gly700) is a topological domain, extracellular. A helical transmembrane segment spans residues 701–731 (EAWCIPFYMMVILIGNLLILYLFVALVSSFA). The Cytoplasmic segment spans residues 732 to 933 (SYDATTEVSK…KTCCKIVENS (202 aa)). A compositionally biased stretch (polar residues) spans 807-833 (DQSSGTEKTPVTESESQSLIASPSVSE). Residues 807–874 (DQSSGTEKTP…MKQSSSSECS (68 aa)) form a disordered region. Ser842 carries the phosphoserine modification. An III repeat occupies 915–1223 (NGKIWRNIRK…KKQYRALKKL (309 aa)). Residues 934-952 (WFECFIGLVTLLCTGTLAL) form a helical membrane-spanning segment. Over 953-960 (EDIYIDQR) the chain is Extracellular. Residues 961–989 (KTIKIFLEYGDMIFAYIFILEMLLKWVAY) traverse the membrane as a helical segment. Residues 990-997 (GFKAYFSN) lie on the Cytoplasmic side of the membrane. A helical transmembrane segment spans residues 998 to 1019 (NWYKLDFMVVIVLCLSLIGKTR). Position 1020 (Glu1020) is a topological domain, extracellular. The helical transmembrane segment at 1021–1039 (DLNPLASIKFLRALRVLSQ) threads the bilayer. The Cytoplasmic segment spans residues 1040-1054 (FERMKVVLRALIKTT). Residues 1055–1079 (LPAVSVFLVCLMIWLLFSVMGVFLF) form a helical membrane-spanning segment. Over 1080–1126 (AGKFYECIDPTRGERFSVFEVMNKSQCENLVFNESMPWENAKLNFDN) the chain is Extracellular. A disulfide bond links Cys1086 and Cys1106. 2 N-linked (GlcNAc...) asparagine glycosylation sites follow: Asn1102 and Asn1112. An intramembrane region (pore-forming) is located at residues 1127-1153 (VGNGFLSLFQVATFNGWISIMNSAIDS). Residues 1154-1166 (VGVYMQPSFEHSL) are Extracellular-facing. Residues 1167–1201 (HMYTYFIIFVVFGLFLPLCMLIGVIIRNFNKQKIK) traverse the membrane as a helical segment. Residues 1202–1249 (QGGSNIFITVKQKKQYRALKKLLYADSQKPAARPRNKFQGFICDVVTH) are Cytoplasmic-facing. An IV repeat occupies 1232–1530 (AARPRNKFQG…WNRFDPDRTQ (299 aa)). A helical membrane pass occupies residues 1250-1271 (RVFNVIIILLICFQATTIMIQN). The Extracellular portion of the chain corresponds to 1272–1275 (DEQS). The helical transmembrane segment at 1276–1304 (PQIETAVFWMNSLFTMLFTLECILKLTAF) threads the bilayer. At 1305–1311 (RCHYFTS) the chain is on the cytoplasmic side. A helical membrane pass occupies residues 1312–1337 (AWNVHDFMVVVFSITGLLLPLSIGQY). Over 1338 to 1340 (FVP) the chain is Extracellular. The chain crosses the membrane as a helical span at residues 1341-1361 (PSLVQLLLLSRIIHVLRPGKG). Over 1362–1376 (PKVFHDLMLPLMLSL) the chain is Cytoplasmic. Residues 1377-1401 (PALLNIALLIFLVMFIYAIFGMYNF) form a helical membrane-spanning segment. Topologically, residues 1402 to 1419 (AYVKKEAGINDVSNFETF) are extracellular. An intramembrane region (pore-forming) is located at residues 1420–1443 (GSSMLCLFQVTTFSGWDGMLDAIF). Residues 1444-1467 (NSQWSDCDPDKINPGTQVRGDCGS) are Extracellular-facing. Cys1450 and Cys1465 form a disulfide bridge. The chain crosses the membrane as a helical span at residues 1468-1503 (PSVGIFYFVSYILISWLIIVNMYVVLIMEFLSIPSK). The Cytoplasmic portion of the chain corresponds to 1504 to 1680 (RKNRTLSEDD…EEKASIQTQI (177 aa)). The tract at residues 1646-1680 (KIQDIPEIDDGREDPNSKGVHSGQIEEKASIQTQI) is disordered.

This sequence belongs to the sodium channel (TC 1.A.1.10) family. SCN7A subfamily. In terms of assembly, the sodium channel formed by SCN7A is probably a heterooligomeric complex consisting of the ion conducting pore forming alpha subunit SCN7A and regulatory beta subunits such as SCN3B. Interacts with ATP1A1; activates ATP1A1 and thereby indirectly signals to nearby neurons to regulate sodium homeostasis. Not tissue specific but widely expressed.

Its subcellular location is the cell membrane. The enzyme catalyses Na(+)(in) = Na(+)(out). Its function is as follows. Sodium leak channel functioning as an osmosensor regulating sodium ion levels in various tissues and organs. While most sodium channels are voltage-gated, SCN7A is not and lets sodium flow through membrane along its concentration gradient. In glial cells of the central nervous system, senses body-fluid sodium levels and controls salt intake behavior as well as voluntary water intake through activation of nearby neurons to maintain appropriate sodium levels in the body. By mediating sodium influx into keratinocytes, also plays a role in skin barrier homeostasis. The protein is Sodium channel protein type 7 subunit alpha of Rattus norvegicus (Rat).